Here is a 362-residue protein sequence, read N- to C-terminus: Cationic peroxidase SPC4 (362 aa).

An N-terminal signal peptide occupies residues 1 to 31; sequence MSRAPTLAAAAAVAAVVLICSSSTATAADGN. 4 disulfides stabilise this stretch: C50–C131, C83–C88, C138–C333, and C218–C245. Catalysis depends on H81, which acts as the Proton acceptor. Residues D82, V85, G87, D89, and S91 each coordinate Ca(2+). N109 carries N-linked (GlcNAc...) asparagine glycosylation. Residue T111 participates in (indol-3-yl)acetate binding. Residue P181 coordinates substrate. H211 lines the heme b pocket. Ca(2+) is bound at residue T212. Residue N234 is glycosylated (N-linked (GlcNAc...) asparagine). Ca(2+) contacts are provided by D257, T260, A263, and D265. The N-linked (GlcNAc...) asparagine glycan is linked to N332.

The protein belongs to the peroxidase family. Classical plant (class III) peroxidase subfamily. Monomer. Requires heme b as cofactor. Ca(2+) is required as a cofactor. Post-translationally, the proportions of glycoforms I and II are 35% and 65% respectively. In terms of tissue distribution, present in germinated and ungerminated grain, seedlings, and leaves and stem of the mature plant.

It localises to the secreted. It catalyses the reaction 2 a phenolic donor + H2O2 = 2 a phenolic radical donor + 2 H2O. Functionally, removal of H(2)O(2), oxidation of toxic reductants, biosynthesis and degradation of lignin, suberization, auxin catabolism, response to environmental stresses such as wounding, pathogen attack and oxidative stress. These functions might be dependent on each isozyme/isoform in each plant tissue. Has a high preference for hydroxycinnamates as substrates. Substrate preference is ferulic acid &gt; p-coumaric acid &gt; N-acetyl tyrosine methyl ester &gt; N-acetyl-tyrosine &gt; tyrosine &gt; catechol &gt; Gly-Tyr-Gly. May be involved in the formation of diferulate linkages in the plant cell wall. The protein is Cationic peroxidase SPC4 of Sorghum bicolor (Sorghum).